Here is a 45-residue protein sequence, read N- to C-terminus: Ice-structuring protein SS-8 (45 aa).

Met-1 is subject to Blocked amino end (Met). 3 repeats span residues 9–21, 22–33, and 34–45; these read KAARLAAAAALAA, KTAADAAAKAAA, and KAAAIAAAAASA.

Belongs to the type-I AFP family.

Functionally, antifreeze proteins lower the blood freezing point. This Myoxocephalus scorpius (Shorthorn sculpin) protein is Ice-structuring protein SS-8.